The primary structure comprises 1132 residues: Major DNA-binding protein (1132 aa).

The interval 1112–1132 is required for nuclear localization; that stretch reads VLKCDETETETDEPMTKKNRL.

It belongs to the herpesviridae major DNA-binding protein family. Homooligomers. Forms double-helical filaments necessary for the formation of replication compartments within the host nucleus. Interacts with the origin-binding protein. Interacts with the helicase primase complex; this interaction stimulates primer synthesis activity of the helicase-primase complex. Interacts with the DNA polymerase. Interacts with the alkaline exonuclease; this interaction increases its nuclease processivity.

The protein localises to the host nucleus. Functionally, single-stranded DNA-binding protein required for DNA replication. Its function is as follows. Plays several crucial roles in viral infection. Participates in the opening of the viral DNA origin to initiate replication by interacting with the origin-binding protein. May disrupt loops, hairpins and other secondary structures present on ssDNA to reduce and eliminate pausing of viral DNA polymerase at specific sites during elongation. Promotes viral DNA recombination by performing strand-transfer, characterized by the ability to transfer a DNA strand from a linear duplex to a complementary single-stranded DNA circle. Can also catalyze the renaturation of complementary single strands. Additionally, reorganizes the host cell nucleus, leading to the formation of prereplicative sites and replication compartments. This process is driven by the protein which can form double-helical filaments in the absence of DNA. The chain is Major DNA-binding protein from Human herpesvirus 6A (strain Uganda-1102) (HHV-6 variant A).